Reading from the N-terminus, the 145-residue chain is Putative antiporter subunit mnhG2 (145 aa).

3 consecutive transmembrane segments (helical) span residues 11–31 (IAAV…IGIV), 51–71 (VLLT…FFSV), and 72–92 (RLLL…HLVA).

This sequence belongs to the CPA3 antiporters (TC 2.A.63) subunit G family. May form a heterooligomeric complex that consists of seven subunits: mnhA2, mnhB2, mnhC2, mnhD2, mnhE2, mnhF2 and mnhG2.

The protein localises to the cell membrane. In Staphylococcus aureus (strain JH9), this protein is Putative antiporter subunit mnhG2 (mnhG2).